The sequence spans 247 residues: Aspartate/glutamate leucyltransferase (247 aa).

This sequence belongs to the R-transferase family. Bpt subfamily.

The protein localises to the cytoplasm. The catalysed reaction is N-terminal L-glutamyl-[protein] + L-leucyl-tRNA(Leu) = N-terminal L-leucyl-L-glutamyl-[protein] + tRNA(Leu) + H(+). It carries out the reaction N-terminal L-aspartyl-[protein] + L-leucyl-tRNA(Leu) = N-terminal L-leucyl-L-aspartyl-[protein] + tRNA(Leu) + H(+). Functionally, functions in the N-end rule pathway of protein degradation where it conjugates Leu from its aminoacyl-tRNA to the N-termini of proteins containing an N-terminal aspartate or glutamate. This chain is Aspartate/glutamate leucyltransferase, found in Chromohalobacter salexigens (strain ATCC BAA-138 / DSM 3043 / CIP 106854 / NCIMB 13768 / 1H11).